The chain runs to 267 residues: 5'-nucleotidase SurE (267 aa).

A divalent metal cation-binding residues include Asp9, Asp10, Ser40, and Asn97.

It belongs to the SurE nucleotidase family. A divalent metal cation is required as a cofactor.

It is found in the cytoplasm. The enzyme catalyses a ribonucleoside 5'-phosphate + H2O = a ribonucleoside + phosphate. Nucleotidase that shows phosphatase activity on nucleoside 5'-monophosphates. In Helicobacter pylori (strain P12), this protein is 5'-nucleotidase SurE.